The sequence spans 320 residues: Nicotianamine synthase 1 (320 aa).

The protein belongs to the nicotianamine synthase (NAS)-like family. In shoots and roots.

It catalyses the reaction 3 S-adenosyl-L-methionine = nicotianamine + 3 S-methyl-5'-thioadenosine + 3 H(+). Functionally, synthesizes nicotianamine, a polyamine which serves as a sensor for the physiological iron status within the plant, and/or might be involved in the transport of iron. This Arabidopsis thaliana (Mouse-ear cress) protein is Nicotianamine synthase 1 (NAS1).